The primary structure comprises 375 residues: Cobalt-precorrin-5B C(1)-methyltransferase (375 aa).

It belongs to the CbiD family.

It carries out the reaction Co-precorrin-5B + S-adenosyl-L-methionine = Co-precorrin-6A + S-adenosyl-L-homocysteine. Its pathway is cofactor biosynthesis; adenosylcobalamin biosynthesis; cob(II)yrinate a,c-diamide from sirohydrochlorin (anaerobic route): step 6/10. Functionally, catalyzes the methylation of C-1 in cobalt-precorrin-5B to form cobalt-precorrin-6A. The sequence is that of Cobalt-precorrin-5B C(1)-methyltransferase from Fusobacterium nucleatum subsp. nucleatum (strain ATCC 25586 / DSM 15643 / BCRC 10681 / CIP 101130 / JCM 8532 / KCTC 2640 / LMG 13131 / VPI 4355).